A 984-amino-acid chain; its full sequence is Probable serine/threonine-protein kinase ireA (984 aa).

Residues 1–26 (MTFSKTRNKIIFLLFLIIINIFNINA) form the signal peptide. The Extracellular segment spans residues 27-436 (YIKDENEDDL…NDLLDSNKLK (410 aa)). 2 disordered regions span residues 70–91 (YSTS…EITK) and 137–157 (EDKS…DENK). 2 stretches are compositionally biased toward low complexity: residues 82–91 (STSTSTEITK) and 141–150 (STSSTSTTSE). Residue Asn-228 is glycosylated (N-linked (GlcNAc...) asparagine). The segment at 352 to 427 (SPPSNNNNNN…GANNNNNNNN (76 aa)) is disordered. Residues 356-397 (NNNNNNNNNNNNNNNNNNNNNNNNNNNNNNNNNNKNNNNNNK) are compositionally biased toward low complexity. An N-linked (GlcNAc...) asparagine glycan is attached at Asn-398. A helical transmembrane segment spans residues 437–457 (NYDIYLYSSIVILITSIIVFI). Residues 458–984 (RSKKNFNLIN…NDQYFVQYYY (527 aa)) are Cytoplasmic-facing. The stretch at 467-533 (NVNNNNNQNN…NDLIDEFIST (67 aa)) forms a coiled coil. The segment covering 472–489 (NNQNNNQNSNQNNNINNK) has biased composition (low complexity). The segment at 472-518 (NNQNNNQNSNQNNNINNKKTPKKKKKKQKNKNNKNNNDEDDENEIEN) is disordered. Residues 490 to 503 (KTPKKKKKKQKNKN) are compositionally biased toward basic residues. A compositionally biased stretch (acidic residues) spans 509–518 (DEDDENEIEN). Residues 575–851 (IITNKILGTG…IGECINHPFF (277 aa)) form the Protein kinase domain. ATP is bound by residues 581-589 (LGTGSCGTI) and Lys-603. The span at 667–676 (PTDSPSIQSS) shows a compositional bias: polar residues. Residues 667-692 (PTDSPSIQSSNNNGNGNNGNNNNNNQ) are disordered. Residues 677 to 691 (NNNGNGNNGNNNNNN) show a composition bias toward low complexity. The Proton acceptor role is filled by Asp-722. A KEN domain is found at 854 to 984 (VHKKLSFLVA…NDQYFVQYYY (131 aa)).

Belongs to the protein kinase superfamily. Ser/Thr protein kinase family.

The protein resides in the membrane. It carries out the reaction L-seryl-[protein] + ATP = O-phospho-L-seryl-[protein] + ADP + H(+). The catalysed reaction is L-threonyl-[protein] + ATP = O-phospho-L-threonyl-[protein] + ADP + H(+). The polypeptide is Probable serine/threonine-protein kinase ireA (ireA) (Dictyostelium discoideum (Social amoeba)).